The primary structure comprises 347 residues: Homeobox protein knotted-1-like 9 (347 aa).

The span at 1-17 (MESFASLAGGGSSSTTA) shows a compositional bias: low complexity. 3 disordered regions span residues 1 to 36 (MESF…PPPL), 122 to 145 (QQLD…DVPD), and 179 to 206 (DSNC…DPSD). The segment covering 22–36 (LIPPENPDRISPPPL) has biased composition (pro residues). Over residues 188-203 (SEEEQDTSCPEAEEID) the composition is skewed to acidic residues. The region spanning 208–228 (QLKHQLLMKYGGSLGDLRQAF) is the ELK domain. A DNA-binding region (homeobox; TALE-type) is located at residues 229 to 293 (SKRTKKGKLP…NQRKRHWKPT (65 aa)).

It belongs to the TALE/KNOX homeobox family.

Its subcellular location is the nucleus. This Oryza sativa subsp. japonica (Rice) protein is Homeobox protein knotted-1-like 9.